Consider the following 277-residue polypeptide: Collectin-10 (277 aa).

Residues 1–27 (MSRKKEQQLRKYGTLVVLFIFQVQIFG) form the signal peptide. The disordered stretch occupies residues 41–82 (THTILPGPKGDDGEKGDRGEVGKQGKVGPKGPKGNKGTVGDV). A compositionally biased stretch (basic and acidic residues) spans 49–63 (KGDDGEKGDRGEVGK). The region spanning 56 to 115 (GDRGEVGKQGKVGPKGPKGNKGTVGDVGDQGMLGKIGPIGGKGDKGAKGISGVSGKKGKA) is the Collagen-like domain. Residues 64-79 (QGKVGPKGPKGNKGTV) show a composition bias toward low complexity. A C-type lectin domain is found at 155–271 (TDEKFYYIVK…CQVTIYFICE (117 aa)). 2 cysteine pairs are disulfide-bonded: Cys176/Cys270 and Cys248/Cys262. A glycan (N-linked (GlcNAc...) asparagine) is linked at Asn258.

This sequence belongs to the COLEC10/COLEC11 family. As to expression, widely expressed. Highly expressed in lung. Weakly expressed in larynx, syrinx and cranial air sac. Expressed throughout the lower gastrointestinal tract in increasing levels starting from a faint signal in duodenum and ending with relatively high signals in proctodeum, coprodeum and urodeum. In the upper part of the gastrointestinal tract, expressed in tongue, crop, and mucosa of the crop.

It localises to the secreted. The protein resides in the golgi apparatus. Its subcellular location is the cytoplasm. Lectin that binds to various sugars: galactose &gt; mannose = fucose &gt; N-acetylglucosamine &gt; N-acetylgalactosamine. Acts as a chemoattractant, probably involved in the regulation of cell migration. In Gallus gallus (Chicken), this protein is Collectin-10 (COLEC10).